The following is a 71-amino-acid chain: MGRVRPRYIKSLGDKLLEMYPDRFTDSFEENKKAVAQLADIPSKRVRNRVAGYITRLVKRRKAQEKAEAAA.

Belongs to the eukaryotic ribosomal protein eS17 family.

This chain is Small ribosomal subunit protein eS17, found in Pyrobaculum neutrophilum (strain DSM 2338 / JCM 9278 / NBRC 100436 / V24Sta) (Thermoproteus neutrophilus).